We begin with the raw amino-acid sequence, 2176 residues long: Protein sidekick-2 (2176 aa).

The signal sequence occupies residues 1-24; sequence MFSSMWRLPLWTLLALHRIHSAGA. At 25 to 1936 the chain is on the extracellular side; sequence QDDVPPYFKT…ASPFYEEWWF (1912 aa). 6 consecutive Ig-like C2-type domains span residues 30–112, 117–204, 219–298, 312–402, 406–495, and 500–589; these read PYFK…TEVQ, GSFE…QPIT, PTII…SSVA, PQFV…LAVT, PNIT…ADLV, and TRIT…AHLR. Cys52 and Cys95 form a disulfide bridge. The N-linked (GlcNAc...) asparagine glycan is linked to Asn197. 4 disulfides stabilise this stretch: Cys241–Cys288, Cys334–Cys384, Cys427–Cys479, and Cys521–Cys573. Fibronectin type-III domains lie at 596–692, 697–793, 798–897, 901–995, 999–1098, 1103–1201, 1206–1303, 1307–1401, 1406–1503, 1508–1625, 1630–1726, 1730–1825, and 1828–1930; these read APEH…LPEE, PPQN…TLQG, PPGN…THED, PVGH…VPPE, APTN…TLQA, APAN…TRES, GPTN…TLDD, PPMG…TEKR, PPSK…TLQA, APTI…VGEA, APQN…TQQA, APGS…TGPG, and APGP…ASPF. The N-linked (GlcNAc...) asparagine glycan is linked to Asn747. Asn940 and Asn952 each carry an N-linked (GlcNAc...) asparagine glycan. An N-linked (GlcNAc...) asparagine glycan is attached at Asn1106. Asn1592 carries an N-linked (GlcNAc...) asparagine glycan. The segment at 1712–1734 is disordered; the sequence is DGPRSTPTRGQTQQAAPSAPGSV. Positions 1716 to 1727 are enriched in polar residues; that stretch reads STPTRGQTQQAA. A helical membrane pass occupies residues 1937-1957; it reads LVVIALVGLIFILLLVFVLII. Topologically, residues 1958 to 2176 are cytoplasmic; it reads RGQSKKYSKK…APIAGFSSFV (219 aa). Disordered stretches follow at residues 2013 to 2032, 2043 to 2070, and 2102 to 2176; these read GLYT…YSDE, AESS…VDTN, and QAYS…SSFV. 2 stretches are compositionally biased toward polar residues: residues 2044–2070 and 2119–2129; these read ESSS…VDTN and VPNSNSTQQGS. Residues 2170-2176 carry the PDZ-binding motif; the sequence is AGFSSFV.

This sequence belongs to the sidekick family. In terms of assembly, homodimer; mediates homophilic interactions to promote cell adhesion. Interacts (via PDZ-binding motif) with MAGI1, MAGI2, DLG2, DLG3 and DLG4. Expressed in retinal ganglion cells (RGCs) that form synapses in distinct inner plexiform layer (IPL) sublaminae. Specifically expressed in specific subsets of retinal ganglion cells (RGCs), named W3B-RGCs, that specifically respond when the timing of the movement of a small object differs from that of the background, but not when they coincide (at protein level). Also present in excitatory amacrine cell type called VG3-ACs, that provide strong and selective input W3B-RGCs (at protein level). Expressed at low levels in the glomeruli.

Its subcellular location is the cell membrane. It is found in the synapse. Adhesion molecule that promotes lamina-specific synaptic connections in the retina and is specifically required for the formation of neuronal circuits that detect motion. Acts by promoting formation of synapses between two specific retinal cell types: the retinal ganglion cells W3B-RGCs and the excitatory amacrine cells VG3-ACs. Formation of synapses between these two cells plays a key role in detection of motion. Promotes synaptic connectivity via homophilic interactions. The protein is Protein sidekick-2 of Mus musculus (Mouse).